We begin with the raw amino-acid sequence, 226 residues long: 2-C-methyl-D-erythritol 4-phosphate cytidylyltransferase (226 aa).

Belongs to the IspD/TarI cytidylyltransferase family. IspD subfamily.

It catalyses the reaction 2-C-methyl-D-erythritol 4-phosphate + CTP + H(+) = 4-CDP-2-C-methyl-D-erythritol + diphosphate. The protein operates within isoprenoid biosynthesis; isopentenyl diphosphate biosynthesis via DXP pathway; isopentenyl diphosphate from 1-deoxy-D-xylulose 5-phosphate: step 2/6. Functionally, catalyzes the formation of 4-diphosphocytidyl-2-C-methyl-D-erythritol from CTP and 2-C-methyl-D-erythritol 4-phosphate (MEP). The protein is 2-C-methyl-D-erythritol 4-phosphate cytidylyltransferase of Rhodococcus opacus (strain B4).